Consider the following 29-residue polypeptide: Varv peptide F (29 aa).

Residues 1 to 29 (GVPICGETCTLGTCYTAGCSCSWPVCTRN) constitute a cross-link (cyclopeptide (Gly-Asn)). 3 disulfide bridges follow: cysteine 5/cysteine 19, cysteine 9/cysteine 21, and cysteine 14/cysteine 26.

In terms of processing, this is a cyclic peptide.

Functionally, probably participates in a plant defense mechanism. Has cytotoxic activity against a variety of drug-resistant and drug-sensitive human tumor cell lines. This is Varv peptide F from Viola arvensis (European field pansy).